The sequence spans 490 residues: GTPase Der (490 aa).

2 consecutive EngA-type G domains span residues Pro3 to Leu166 and Ile203 to Thr376. GTP contacts are provided by residues Gly9–Ser16, Asp56–Ile60, Asn118–Asp121, Gly209–Ser216, Asp256–Val260, and Asn321–Asp324. Residues Arg377–Glu461 enclose the KH-like domain.

It belongs to the TRAFAC class TrmE-Era-EngA-EngB-Septin-like GTPase superfamily. EngA (Der) GTPase family. As to quaternary structure, associates with the 50S ribosomal subunit.

In terms of biological role, GTPase that plays an essential role in the late steps of ribosome biogenesis. This Escherichia coli O7:K1 (strain IAI39 / ExPEC) protein is GTPase Der.